We begin with the raw amino-acid sequence, 181 residues long: Phospholipase A2 inhibitor gamma subunit B (181 aa).

8 cysteine pairs are disulfide-bonded: cysteine 3–cysteine 27, cysteine 6–cysteine 13, cysteine 20–cysteine 48, cysteine 54–cysteine 75, cysteine 76–cysteine 81, cysteine 101–cysteine 126, cysteine 119–cysteine 146, and cysteine 152–cysteine 172.

This sequence belongs to the CNF-like-inhibitor family. Heterotrimer of 2 subunits A and 1 subunit B. As to expression, expressed by the liver.

It is found in the secreted. Strongly inhibits its own venom PLA2 and all other PLA2s tested including Elapid, Crotalid and Viperid venom PLA2s, as well as honeybee PLA2s. The chain is Phospholipase A2 inhibitor gamma subunit B from Laticauda semifasciata (Black-banded sea krait).